The following is a 410-amino-acid chain: 2-epi-5-epi-valiolone synthase (410 aa).

NAD(+)-binding positions include Asp-66, Glu-97 to Lys-100, Gly-130 to Asp-134, Thr-154 to Thr-155, Lys-167, Lys-176, and Phe-194 to Thr-197. Lys-167 is an active-site residue. Positions 209, 280, and 296 each coordinate a divalent metal cation.

This sequence belongs to the sugar phosphate cyclases superfamily. EEVS family. Requires NAD(+) as cofactor. The cofactor is Co(2+).

It catalyses the reaction D-sedoheptulose 7-phosphate = 2-epi-5-epi-valiolone + phosphate. Functionally, catalyzes the cyclization of D-sedoheptulose 7-phosphate to 2-epi-5-epi-valiolone. Involved in salbostatin biosynthesis. The polypeptide is 2-epi-5-epi-valiolone synthase (Streptomyces albus (strain ATCC 21838 / DSM 41398 / FERM P-419 / JCM 4703 / NBRC 107858)).